Consider the following 466-residue polypeptide: Ferrochelatase-1, chloroplastic/mitochondrial (466 aa).

A compositionally biased stretch (polar residues) spans 1–11 (MQATALSSGFN). Residues 1–23 (MQATALSSGFNPLTKRKDHRFPR) form a disordered region. Residues 1-35 (MQATALSSGFNPLTKRKDHRFPRSCSQRNSLSLIQ) constitute a chloroplast and mitochondrion transit peptide.

This sequence belongs to the ferrochelatase family. Expressed in roots, leaves, stems and flowers. Present in both leaves and roots.

It localises to the plastid. Its subcellular location is the chloroplast membrane. It is found in the chloroplast thylakoid membrane. The protein localises to the mitochondrion. It catalyses the reaction heme b + 2 H(+) = protoporphyrin IX + Fe(2+). The protein operates within porphyrin-containing compound metabolism; protoheme biosynthesis; protoheme from protoporphyrin-IX: step 1/1. Catalyzes the last step of heme biosynthesis by inserting ferrous iron into protoporphyrin IX to produce protoheme. Produces heme for photosynthetic cytochromes, but does not seem to be involved in stress responses. May be involved in wound-induced supply of heme to defensive hemoproteins outside plastids. Regulates the expression of photosynthesis-associated nuclear genes in undeveloped chloroplasts through production of heme. This is Ferrochelatase-1, chloroplastic/mitochondrial from Arabidopsis thaliana (Mouse-ear cress).